Here is a 162-residue protein sequence, read N- to C-terminus: Beta-lactoglobulin-3 (162 aa).

2 disulfide bridges follow: Cys66–Cys160 and Cys106–Cys119.

The protein belongs to the calycin superfamily. Lipocalin family. Monomer.

The protein resides in the secreted. In terms of biological role, lactoglobulin is the primary component of whey, it binds retinol and is probably involved in the transport of that molecule. The chain is Beta-lactoglobulin-3 (LGB3) from Felis catus (Cat).